We begin with the raw amino-acid sequence, 156 residues long: Arginine repressor (156 aa).

Belongs to the ArgR family.

It is found in the cytoplasm. It functions in the pathway amino-acid biosynthesis; L-arginine biosynthesis [regulation]. Functionally, regulates arginine biosynthesis genes. The polypeptide is Arginine repressor (Shewanella sediminis (strain HAW-EB3)).